A 154-amino-acid polypeptide reads, in one-letter code: Ribosome maturation factor RimP (154 aa).

This sequence belongs to the RimP family.

It localises to the cytoplasm. Functionally, required for maturation of 30S ribosomal subunits. The chain is Ribosome maturation factor RimP from Finegoldia magna (strain ATCC 29328 / DSM 20472 / WAL 2508) (Peptostreptococcus magnus).